The following is a 190-amino-acid chain: Corticoliberin (190 aa).

The first 24 residues, 1 to 24 (MRLRLLVSVGVLLVALLPSPPCRA), serve as a signal peptide directing secretion. Residues 25–147 (LLSRGPIPGA…QEAPAARKRR (123 aa)) constitute a propeptide that is removed on maturation. 2 disordered regions span residues 33–57 (GARQASQHPQPLSFFQPPPQPQEPQ) and 116–151 (RRPFDSPAGPAERGTENALGSRQEAPAARKRRSQEP). Ala188 is subject to Alanine amide.

This sequence belongs to the sauvagine/corticotropin-releasing factor/urotensin I family. As to quaternary structure, interacts (via C-terminus) with CRFR1 (via N-terminal extracellular domain). As to expression, produced by the hypothalamus.

Its subcellular location is the secreted. Its function is as follows. Hormone regulating the release of corticotropin from pituitary gland. Induces NLRP6 in intestinal epithelial cells, hence may influence gut microbiota profile. The chain is Corticoliberin (CRH) from Bos taurus (Bovine).